We begin with the raw amino-acid sequence, 418 residues long: ATP phosphoribosyltransferase regulatory subunit (418 aa).

Belongs to the class-II aminoacyl-tRNA synthetase family. HisZ subfamily. In terms of assembly, heteromultimer composed of HisG and HisZ subunits.

The protein resides in the cytoplasm. The protein operates within amino-acid biosynthesis; L-histidine biosynthesis; L-histidine from 5-phospho-alpha-D-ribose 1-diphosphate: step 1/9. In terms of biological role, required for the first step of histidine biosynthesis. May allow the feedback regulation of ATP phosphoribosyltransferase activity by histidine. The protein is ATP phosphoribosyltransferase regulatory subunit of Halothermothrix orenii (strain H 168 / OCM 544 / DSM 9562).